The following is a 357-amino-acid chain: Ribosomal RNA large subunit methyltransferase M (357 aa).

S-adenosyl-L-methionine-binding positions include Ser-183, 216–219, Asp-235, Asp-255, and Asp-271; that span reads APGG. Lys-300 (proton acceptor) is an active-site residue.

Belongs to the class I-like SAM-binding methyltransferase superfamily. RNA methyltransferase RlmE family. RlmM subfamily. Monomer.

It localises to the cytoplasm. It carries out the reaction cytidine(2498) in 23S rRNA + S-adenosyl-L-methionine = 2'-O-methylcytidine(2498) in 23S rRNA + S-adenosyl-L-homocysteine + H(+). Its function is as follows. Catalyzes the 2'-O-methylation at nucleotide C2498 in 23S rRNA. The polypeptide is Ribosomal RNA large subunit methyltransferase M (Pseudomonas savastanoi pv. phaseolicola (strain 1448A / Race 6) (Pseudomonas syringae pv. phaseolicola (strain 1448A / Race 6))).